The chain runs to 115 residues: MVKSTSKDAQDLFRSLRSAYSATPTNLKIIDLYVVFAVFTALIQVVYMALVGSFPFNSFLSGVLSCIGTAVLAVCLRIQVNKENKEFKDLAPERAFADFVLCNLVLHLVIINFLG.

At 1-31 the chain is on the cytoplasmic side; the sequence is MVKSTSKDAQDLFRSLRSAYSATPTNLKIID. Residues 32–52 form a helical membrane-spanning segment; the sequence is LYVVFAVFTALIQVVYMALVG. The Lumenal segment spans residues 53–55; the sequence is SFP. A helical transmembrane segment spans residues 56–76; the sequence is FNSFLSGVLSCIGTAVLAVCL. At 77 to 94 the chain is on the cytoplasmic side; it reads RIQVNKENKEFKDLAPER. Residues 95–115 form a helical membrane-spanning segment; it reads AFADFVLCNLVLHLVIINFLG.

It belongs to the DAD/OST2 family. As to quaternary structure, component of the oligosaccharyltransferase (OST) complex. As to expression, ubiquitous.

Its subcellular location is the endoplasmic reticulum membrane. It participates in protein modification; protein glycosylation. Subunit of the oligosaccharyl transferase (OST) complex that catalyzes the initial transfer of a defined glycan (Glc(3)Man(9)GlcNAc(2) in eukaryotes) from the lipid carrier dolichol-pyrophosphate to an asparagine residue within an Asn-X-Ser/Thr consensus motif in nascent polypeptide chains, the first step in protein N-glycosylation. N-glycosylation occurs cotranslationally and the complex associates with the Sec61 complex at the channel-forming translocon complex that mediates protein translocation across the endoplasmic reticulum (ER). All subunits are required for a maximal enzyme activity. The chain is Dolichyl-diphosphooligosaccharide--protein glycosyltransferase subunit DAD1 (DAD1) from Arabidopsis thaliana (Mouse-ear cress).